The chain runs to 3401 residues: Genome polyprotein (3401 aa).

Residues 1–104 (MPVRPRNKPK…GRKKRRSMTH (104 aa)) are Cytoplasmic-facing. A propeptide spans 101–117 (SMTHGIILSLGVTMVIG) (ER anchor for the capsid protein C, removed in mature form by serine protease NS3). A helical transmembrane segment spans residues 105 to 125 (GIILSLGVTMVIGASLHHHGG). Residues 126 to 240 (RYLLNVTHAD…GERQIQRIER (115 aa)) are Extracellular-facing. Residues N130 and N146 are each glycosylated (N-linked (GlcNAc...) asparagine; by host). Residues 241 to 261 (WMMRNPFYAAISLLLAWWVGS) traverse the membrane as a helical segment. Over 262–266 (DIKQK) the chain is Cytoplasmic. The helical transmembrane segment at 267 to 281 (VLIAFLVLAIGPAYS) threads the bilayer. Residues 282–725 (THCVGIPKRD…HTVFGNVFHS (444 aa)) lie on the Extracellular side of the membrane. Cystine bridges form between C284/C311, C355/C386, C373/C397, C462/C564, and C581/C611. Residues 379-392 (DRGWGNGCGLFGKG) are fusion peptide. Residues 726 to 746 (IFGGLSWITKIILGGMFLWLG) traverse the membrane as a helical segment. Residues 747 to 753 (VNSRNQT) are Extracellular-facing. A helical membrane pass occupies residues 754-774 (MCMVLMAVGGILLFMTLGVSG). The Extracellular portion of the chain corresponds to 775 to 1122 (EVGCSLDIKR…NVHEEHLVRS (348 aa)). 6 disulfides stabilise this stretch: C778–C789, C829–C916, C952–C997, C1054–C1103, C1065–C1087, and C1086–C1090. N-linked (GlcNAc...) asparagine; by host glycosylation is found at N904 and N981. The helical transmembrane segment at 1123–1143 (WASAGTGMAESSLGLVALFLF) threads the bilayer. Over 1144–1198 (TDIFARKRMTRKFMVIGCLGVLSVMIVGGFTALDLIRYIIVVGQHFASMNHGGDV) the chain is Cytoplasmic. Residues 1199 to 1219 (AYLAIIAVGKLRPGLLMMYSF) traverse the membrane as a helical segment. Over 1220–1287 (KAAWSPKERV…PILALLTPLS (68 aa)) the chain is Lumenal. Residues 1288–1308 (MEIIRKTGIFACVGLLGLSLW) form a helical membrane-spanning segment. At 1309–1352 (RGGDTTMRKGMPLLAGAATAASGLTRASLSVVFILCATAASRRS) the chain is on the cytoplasmic side. The chain crosses the membrane as a helical span at residues 1353–1373 (WPIGEIMAIVGIVGTGFGMAV). Topologically, residues 1374–1376 (NDQ) are lumenal. A helical membrane pass occupies residues 1377–1397 (ASLAGPMLVFGLIMIVYATLG). Over 1398–1447 (RADGLTLKRVGDITWEEEAVHSGSSTRYDVTLNEAGEFKLVHEEPVVWSH) the chain is Cytoplasmic. The interval 1404–1443 (LKRVGDITWEEEAVHSGSSTRYDVTLNEAGEFKLVHEEPV) is interacts with and activates NS3 protease. The helical intramembrane region spans 1448-1468 (VVFLVVALIAASVHPIALVVV). Residues 1469–2154 (TIIWTYGKKH…ASTNAPEAVT (686 aa)) lie on the Cytoplasmic side of the membrane. A Peptidase S7 domain is found at 1481 to 1661 (GGVLWDIPIA…GGEGVTEEPL (181 aa)). Active-site charge relay system; for serine protease NS3 activity residues include H1532, D1556, and S1617. One can recognise a Helicase ATP-binding domain in the interval 1665 to 1821 (ATMLRKGKLT…ESNGEIEDLR (157 aa)). Residues 1669 to 1672 (RKGK) form an important for RNA-binding region. 1678-1685 (YHPGAGKT) serves as a coordination point for ATP. The short motif at 1769–1772 (DEAH) is the DEAH box element. One can recognise a Helicase C-terminal domain in the interval 1816 to 1995 (EIEDLRRDIP…GMVAPLYDVE (180 aa)). A helical membrane pass occupies residues 2155–2175 (ILLMTGIVVACTLGVGLAFMW). Residues 2176-2181 (PKGVDK) lie on the Lumenal side of the membrane. The helical intramembrane region spans 2182–2200 (MSMGMITMSIAGYLMLQGG). A topological domain (lumenal) is located at residue L2201. Residues 2202 to 2222 (TPVQVASVLLIFFIFMVVLIP) form a helical membrane-spanning segment. Residues 2223–2235 (EAGTQRSINDNKT) lie on the Cytoplasmic side of the membrane. The chain crosses the membrane as a helical span at residues 2236–2250 (LYVLLGVALLIGAIT). Topologically, residues 2251-2285 (ANEMGYLEKTKRDLLGERVQNEWKLELPMFDLRPG) are cytoplasmic. The helical intramembrane region spans 2286 to 2306 (AAWSIYVGLATLVMPVLDHWI). The Lumenal segment spans residues 2307–2354 (RTEYGSLSLTGIAQQASILQAMDKGVPFFKLNMSVIVLLVSVWNNFSM). Residues 2355 to 2375 (LSVLCGVGLLGVHCAFVLPGL) form a helical membrane-spanning segment. Residues 2376-2418 (RAQAAKQAQRRVYHGVAKNPVVDGQTTAEIETAPEMPPLYEKK) are Cytoplasmic-facing. Residues 2419–2439 (LALVLLGVVAIANGVMVRSAF) traverse the membrane as a helical segment. The Lumenal portion of the chain corresponds to 2440–2467 (SMAETVVLLSAAVGPLLEGNTSAIWNGP). A helical membrane pass occupies residues 2468-2488 (MAVAMAGIMRGNYYAGIGLAY). Topologically, residues 2489 to 3401 (NLWILQSPKR…YSVQEVGTVL (913 aa)) are cytoplasmic. The mRNA cap 0-1 NS5-type MT domain occupies 2499-2763 (GRSTTMTLGE…DVVFPTGTRN (265 aa)). Residue S2554 coordinates S-adenosyl-L-methionine. S2554 carries the phosphoserine modification. The active-site For 2'-O-MTase activity is the K2559. Residues G2584, W2585, T2602, L2603, D2629, and V2630 each coordinate S-adenosyl-L-methionine. D2644 (for 2'-O-MTase activity) is an active-site residue. I2645 lines the S-adenosyl-L-methionine pocket. Catalysis depends on for 2'-O-MTase activity residues K2680 and E2716. Y2718 provides a ligand contact to S-adenosyl-L-methionine. The short motif at 2869–2902 (RAIMEVVNKWMFDFLAREKAPRICTKEEFINKVR) is the Nuclear localization signal element. The Zn(2+) site is built by E2936, H2940, C2945, and C2948. The 153-residue stretch at 3026–3178 (GIMYADDTAG…APLDERFGLA (153 aa)) folds into the RdRp catalytic domain. Zn(2+) contacts are provided by H3213, C3229, and C3348.

This sequence in the N-terminal section; belongs to the class I-like SAM-binding methyltransferase superfamily. mRNA cap 0-1 NS5-type methyltransferase family. In terms of assembly, homodimer. Interacts (via N-terminus) with host EXOC1 (via C-terminus); this interaction results in EXOC1 degradation through the proteasome degradation pathway. Forms heterodimers with envelope protein E in the endoplasmic reticulum and Golgi. As to quaternary structure, homodimer; in the endoplasmic reticulum and Golgi. Interacts with protein prM. Interacts with non-structural protein 1. In terms of assembly, homodimer; Homohexamer when secreted. Interacts with envelope protein E. NS1 interacts with NS4B. Interacts with host complement protein CFH; this interaction leads to the degradation of C3. Interacts (via N-terminus) with serine protease NS3. As to quaternary structure, forms a heterodimer with serine protease NS3. May form homooligomers. In terms of assembly, forms a heterodimer with NS2B. Interacts with non-structural protein 2A (via N-terminus). Interacts with NS4B. Interacts with unphosphorylated RNA-directed RNA polymerase NS5; this interaction stimulates RNA-directed RNA polymerase NS5 guanylyltransferase activity. NS3 interacts with host PDCD6IP; this interaction contributes to virion release. Interacts with serine protease NS3. As to quaternary structure, homodimer. Interacts with host STAT2; this interaction prevents the establishment of cellular antiviral state. Interacts with serine protease NS3. Interacts with host TRIM23; this interaction leads to NS5 ubiquitination. Post-translationally, specific enzymatic cleavages in vivo yield mature proteins. The nascent capsid protein C contains a C-terminal hydrophobic domain that act as a signal sequence for translocation of prM into the lumen of the ER. Mature capsid protein C is cleaved at a site upstream of this hydrophobic domain by NS3. prM is cleaved in post-Golgi vesicles by a host furin, releasing the mature small envelope protein M, and peptide pr. Non-structural protein 2A-alpha, a C-terminally truncated form of non-structural protein 2A, results from partial cleavage by NS3. Specific enzymatic cleavages in vivo yield mature proteins peptide 2K acts as a signal sequence and is removed from the N-terminus of NS4B by the host signal peptidase in the ER lumen. Signal cleavage at the 2K-4B site requires a prior NS3 protease-mediated cleavage at the 4A-2K site. In terms of processing, cleaved in post-Golgi vesicles by a host furin, releasing the mature small envelope protein M, and peptide pr. This cleavage is incomplete as up to 30% of viral particles still carry uncleaved prM. N-glycosylated. Post-translationally, N-glycosylated. The excreted form is glycosylated and this is required for efficient secretion of the protein from infected cells. In terms of processing, polyubiquitinated; ubiquitination is probably mediated by host TRIM23 and is prerequisite for NS5-STAT2 interaction. NS5 is not ISGylated or sumoylated. Phosphorylated on serines residues. This phosphorylation may trigger NS5 nuclear localization.

It is found in the virion. Its subcellular location is the host nucleus. It localises to the host cytoplasm. The protein localises to the host perinuclear region. The protein resides in the virion membrane. It is found in the host endoplasmic reticulum membrane. Its subcellular location is the secreted. It carries out the reaction Selective hydrolysis of -Xaa-Xaa-|-Yaa- bonds in which each of the Xaa can be either Arg or Lys and Yaa can be either Ser or Ala.. It catalyses the reaction RNA(n) + a ribonucleoside 5'-triphosphate = RNA(n+1) + diphosphate. The catalysed reaction is a ribonucleoside 5'-triphosphate + H2O = a ribonucleoside 5'-diphosphate + phosphate + H(+). The enzyme catalyses ATP + H2O = ADP + phosphate + H(+). It carries out the reaction a 5'-end (5'-triphosphoguanosine)-ribonucleoside in mRNA + S-adenosyl-L-methionine = a 5'-end (N(7)-methyl 5'-triphosphoguanosine)-ribonucleoside in mRNA + S-adenosyl-L-homocysteine. It catalyses the reaction a 5'-end (N(7)-methyl 5'-triphosphoguanosine)-ribonucleoside in mRNA + S-adenosyl-L-methionine = a 5'-end (N(7)-methyl 5'-triphosphoguanosine)-(2'-O-methyl-ribonucleoside) in mRNA + S-adenosyl-L-homocysteine + H(+). Plays a role in virus budding by binding to the cell membrane and gathering the viral RNA into a nucleocapsid that forms the core of a mature virus particle. During virus entry, may induce genome penetration into the host cytoplasm after hemifusion induced by the surface proteins. Can migrate to the cell nucleus where it modulates host functions. In terms of biological role, inhibits RNA silencing by interfering with host Dicer. Its function is as follows. Prevents premature fusion activity of envelope proteins in trans-Golgi by binding to envelope protein E at pH6.0. After virion release in extracellular space, gets dissociated from E dimers. Functionally, acts as a chaperone for envelope protein E during intracellular virion assembly by masking and inactivating envelope protein E fusion peptide. prM is the only viral peptide matured by host furin in the trans-Golgi network probably to avoid catastrophic activation of the viral fusion activity in acidic Golgi compartment prior to virion release. prM-E cleavage is inefficient, and many virions are only partially matured. These uncleaved prM would play a role in immune evasion. May play a role in virus budding. Exerts cytotoxic effects by activating a mitochondrial apoptotic pathway through M ectodomain. May display a viroporin activity. In terms of biological role, binds to host cell surface receptor and mediates fusion between viral and cellular membranes. Envelope protein is synthesized in the endoplasmic reticulum in the form of heterodimer with protein prM. They play a role in virion budding in the ER, and the newly formed immature particle is covered with 60 spikes composed of heterodimer between precursor prM and envelope protein E. The virion is transported to the Golgi apparatus where the low pH causes dissociation of PrM-E heterodimers and formation of E homodimers. prM-E cleavage is inefficient, and many virions are only partially matured. These uncleaved prM would play a role in immune evasion. Its function is as follows. Involved in immune evasion, pathogenesis and viral replication. Once cleaved off the polyprotein, is targeted to three destinations: the viral replication cycle, the plasma membrane and the extracellular compartment. Essential for viral replication. Required for formation of the replication complex and recruitment of other non-structural proteins to the ER-derived membrane structures. Excreted as a hexameric lipoparticle that plays a role against host immune response. Antagonizing the complement function. Binds to the host macrophages and dendritic cells. Inhibits signal transduction originating from Toll-like receptor 3 (TLR3). Functionally, component of the viral RNA replication complex that functions in virion assembly and antagonizes the host immune response. Required cofactor for the serine protease function of NS3. May have membrane-destabilizing activity and form viroporins. In terms of biological role, displays three enzymatic activities: serine protease, NTPase and RNA helicase. NS3 serine protease, in association with NS2B, performs its autocleavage and cleaves the polyprotein at dibasic sites in the cytoplasm: C-prM, NS2A-NS2B, NS2B-NS3, NS3-NS4A, NS4A-2K and NS4B-NS5. NS3 RNA helicase binds RNA and unwinds dsRNA in the 3' to 5' direction. Also plays a role in virus assembly. Its function is as follows. Regulates the ATPase activity of the NS3 helicase activity. NS4A allows NS3 helicase to conserve energy during unwinding. Functionally, functions as a signal peptide for NS4B and is required for the interferon antagonism activity of the latter. Induces the formation of ER-derived membrane vesicles where the viral replication takes place. Inhibits interferon (IFN)-induced host STAT1 phosphorylation and nuclear translocation, thereby preventing the establishment of cellular antiviral state by blocking the IFN-alpha/beta pathway. In terms of biological role, replicates the viral (+) and (-) RNA genome, and performs the capping of genomes in the cytoplasm. NS5 methylates viral RNA cap at guanine N-7 and ribose 2'-O positions. Besides its role in RNA genome replication, also prevents the establishment of cellular antiviral state by blocking the interferon-alpha/beta (IFN-alpha/beta) signaling pathway. IFN-I induces binding of NS5 to host IFN-activated transcription factor STAT2, preventing its transcriptional activity. Host TRIM23 is the E3 ligase that interacts with and polyubiquitinates NS5 to promote its binding to STAT2 and trigger IFN-I signaling inhibition. This chain is Genome polyprotein, found in Edge Hill virus (EHV).